Here is a 41-residue protein sequence, read N- to C-terminus: Pi-stichotoxin-Hcr5c (41 aa).

3 disulfides stabilise this stretch: cysteine 4–cysteine 37, cysteine 6–cysteine 30, and cysteine 20–cysteine 38.

This sequence belongs to the sea anemone type 3 (BDS) potassium channel toxin family.

It localises to the secreted. Its subcellular location is the nematocyst. Its function is as follows. Weakly and reversibly inhibits rat homomeric ASIC1 (isoform ASIC1a) (IC(50)=4.95 uM), and ASIC3 (IC(50)=17 uM). ASIC1a current inhibition and ASIC3 transient current inhibition are not complete, and reach a maximum of 70% inhibition and 80%, respectively. This chain is Pi-stichotoxin-Hcr5c, found in Radianthus crispa (Leathery sea anemone).